A 259-amino-acid chain; its full sequence is Ribosomal RNA small subunit methyltransferase J (259 aa).

Residues 101-102 (RD), 117-118 (ER), 153-154 (SS), and Asp176 contribute to the S-adenosyl-L-methionine site.

This sequence belongs to the methyltransferase superfamily. RsmJ family.

It localises to the cytoplasm. The catalysed reaction is guanosine(1516) in 16S rRNA + S-adenosyl-L-methionine = N(2)-methylguanosine(1516) in 16S rRNA + S-adenosyl-L-homocysteine + H(+). In terms of biological role, specifically methylates the guanosine in position 1516 of 16S rRNA. The chain is Ribosomal RNA small subunit methyltransferase J from Vibrio vulnificus (strain CMCP6).